The primary structure comprises 206 residues: Cytochrome c biogenesis ATP-binding export protein CcmA (206 aa).

In terms of domain architecture, ABC transporter spans Val3 to Leu206. Gly35–Thr42 is a binding site for ATP.

Belongs to the ABC transporter superfamily. CcmA exporter (TC 3.A.1.107) family. In terms of assembly, the complex is composed of two ATP-binding proteins (CcmA) and two transmembrane proteins (CcmB).

The protein localises to the cell inner membrane. The catalysed reaction is heme b(in) + ATP + H2O = heme b(out) + ADP + phosphate + H(+). Part of the ABC transporter complex CcmAB involved in the biogenesis of c-type cytochromes; once thought to export heme, this seems not to be the case, but its exact role is uncertain. Responsible for energy coupling to the transport system. The chain is Cytochrome c biogenesis ATP-binding export protein CcmA from Roseobacter denitrificans (strain ATCC 33942 / OCh 114) (Erythrobacter sp. (strain OCh 114)).